The primary structure comprises 387 residues: Ferrochelatase (387 aa).

Positions 1–318 (MGRVGVLLLN…VFIDALAQMV (318 aa)) are ferrochelatase. The Fe cation site is built by H196 and E277. Residues 319-387 (MDSLNDPPCT…QGPLHFVGLL (69 aa)) are hlip domain.

It in the N-terminal section; belongs to the ferrochelatase family. This sequence in the C-terminal section; belongs to the Hlip family.

The protein resides in the cytoplasm. The catalysed reaction is heme b + 2 H(+) = protoporphyrin IX + Fe(2+). Its pathway is porphyrin-containing compound metabolism; protoheme biosynthesis; protoheme from protoporphyrin-IX: step 1/1. In terms of biological role, catalyzes the ferrous insertion into protoporphyrin IX. Functionally, the Hlip proteins might regulate tetrapyrrole biosynthesis, maybe at the level of aminolevulinic acid synthesis. Deletion of 4 to 5 members of the Hlip family (always including this member) suggests the proteins are involved in regulation of chlorophyll biosynthesis, in stabilization of chlorophyll-binding proteins and/or in reuse of chlorophylls, and may regulate tetrapyrrole biosynthesis. The Hlip proteins probably stabilize PSII assembly intermediates. In Synechocystis sp. (strain ATCC 27184 / PCC 6803 / Kazusa), this protein is Ferrochelatase.